The chain runs to 324 residues: Stomatin-like protein stl-1 (324 aa).

The protein belongs to the band 7/mec-2 family. In terms of tissue distribution, widely expressed in most tissues, including body wall muscles, intestinal epithelia, and pharynx and head neurons.

It localises to the mitochondrion. Its function is as follows. Mitochondrial protein that probably regulates the biogenesis and the activity of mitochondria. In neurons, involved in mitochondrial fusion and recovery of normal locomotory behavior during reoxygenation; probably acts independently of egl-9 and the canonical hypoxia response pathway. The protein is Stomatin-like protein stl-1 of Caenorhabditis elegans.